The primary structure comprises 159 residues: H/ACA ribonucleoprotein complex subunit 2-like protein (159 aa).

Residues 1-28 (MAKTPKKDKTEEKEEHEESGGNKEDRER) are disordered.

Belongs to the eukaryotic ribosomal protein eL8 family. As to quaternary structure, component of the small nucleolar ribonucleoprotein particle containing H/ACA-type snoRNAs (H/ACA snoRNPs). Component of the telomerase holoenzyme complex.

Its subcellular location is the nucleus. It is found in the nucleolus. Functionally, required for ribosome biogenesis. Part of a complex which catalyzes pseudouridylation of rRNA. This involves the isomerization of uridine such that the ribose is subsequently attached to C5, instead of the normal N1. Pseudouridine ('psi') residues may serve to stabilize the conformation of rRNAs. The sequence is that of H/ACA ribonucleoprotein complex subunit 2-like protein from Branchiostoma belcheri (Amphioxus).